The primary structure comprises 57 residues: Andropin (57 aa).

The first 23 residues, 1 to 23 (MKYFVVLVVLALILAISVGPSDA), serve as a signal peptide directing secretion.

Belongs to the andropin family. As to expression, ejaculatory duct of adult males.

It is found in the secreted. In terms of biological role, male-specific peptide with moderate activity against Gram-positive bacteria. The protein is Andropin (Anp) of Drosophila melanogaster (Fruit fly).